The following is a 648-amino-acid chain: Threonine--tRNA ligase (648 aa).

The 61-residue stretch at 1–61 folds into the TGS domain; the sequence is MIDIILPDGS…INTATVKAIT (61 aa). The tract at residues 243–549 is catalytic; it reads DHRKLGRELE…LIEHYSGKLP (307 aa). Residues Cys349, His400, and His526 each coordinate Zn(2+).

Belongs to the class-II aminoacyl-tRNA synthetase family. Homodimer. Zn(2+) serves as cofactor.

The protein localises to the cytoplasm. It carries out the reaction tRNA(Thr) + L-threonine + ATP = L-threonyl-tRNA(Thr) + AMP + diphosphate + H(+). Catalyzes the attachment of threonine to tRNA(Thr) in a two-step reaction: L-threonine is first activated by ATP to form Thr-AMP and then transferred to the acceptor end of tRNA(Thr). Also edits incorrectly charged L-seryl-tRNA(Thr). The protein is Threonine--tRNA ligase of Orientia tsutsugamushi (strain Ikeda) (Rickettsia tsutsugamushi).